Here is a 278-residue protein sequence, read N- to C-terminus: Probable esterase TOX9 (278 aa).

Catalysis depends on charge relay system residues S119, D222, and H250.

This sequence belongs to the LovG family.

Its pathway is mycotoxin biosynthesis. In terms of biological role, probable esterase; part of the Tox1A locus, one of the 2 loci that mediate the biosynthesis of T-toxin, a family of linear polyketides 37 to 45 carbons in length, of which the major component is 41 carbons, and which leads to high virulence to maize. One of the PKSs (PKS1 or PKS2) could synthesize a precursor, used subsequently by the other PKS as starter unit, to add additional carbons. Variability in the length of the final carbon backbone C35-47 could be achieved by varying the number of condensation cycles, or use of different starter or extender units or might be due to decarboxylation of the penultimate product, catalyzed by DEC1. Additional proteins are required for the biosynthesis of T-toxin, including oxidoreductases RED1, RED2, RED3, LAM1 and OXI1, as well as esterase TOX9. This is Probable esterase TOX9 from Cochliobolus heterostrophus (strain C4 / ATCC 48331 / race T) (Southern corn leaf blight fungus).